A 107-amino-acid polypeptide reads, in one-letter code: Ig kappa chain V-VI region NQ6-8.3.1 (107 aa).

The tract at residues 1-23 is framework-1; sequence QIVLTQSPAIMSASPGQKVTMTC. A disulfide bridge connects residues C23 and C87. Positions 24 to 33 are complementarity-determining-1; sequence SASSSVSYMH. Residues 34–48 are framework-2; the sequence is WYQQKSGTSPKRWIY. A complementarity-determining-2 region spans residues 49–55; the sequence is DTSKLAS. Positions 56–87 are framework-3; sequence GXPARFSGSGSATSYSLTITSMQAEDAATYYC. Positions 88–96 are complementarity-determining-3; it reads QQWSSNPLT. A framework-4 region spans residues 97–106; it reads FGAGTKLELK.

Functionally, anti-2-phenyl oxazolone (PHOX) Antibody. The sequence is that of Ig kappa chain V-VI region NQ6-8.3.1 from Mus musculus (Mouse).